We begin with the raw amino-acid sequence, 257 residues long: Peptide methionine sulfoxide reductase (257 aa).

The tract at residues 61-88 (LGFGSRPQPDPAASSAIAQGPDDDVPSP) is disordered. Ser244 carries the phosphoserine modification.

This sequence belongs to the MsrA Met sulfoxide reductase family.

The catalysed reaction is L-methionyl-[protein] + [thioredoxin]-disulfide + H2O = L-methionyl-(S)-S-oxide-[protein] + [thioredoxin]-dithiol. It carries out the reaction [thioredoxin]-disulfide + L-methionine + H2O = L-methionine (S)-S-oxide + [thioredoxin]-dithiol. In terms of biological role, has an important function as a repair enzyme for proteins that have been inactivated by oxidation. Catalyzes the reversible oxidation-reduction of methionine sulfoxide in proteins to methionine. This is Peptide methionine sulfoxide reductase (PMSR) from Brassica napus (Rape).